The primary structure comprises 438 residues: Xylose isomerase (438 aa).

Residues His-100 and Asp-103 contribute to the active site. 7 residues coordinate Mg(2+): Glu-231, Glu-267, His-270, Asp-295, Asp-306, Asp-308, and Asp-338.

The protein belongs to the xylose isomerase family. In terms of assembly, homotetramer. Requires Mg(2+) as cofactor.

The protein localises to the cytoplasm. The enzyme catalyses alpha-D-xylose = alpha-D-xylulofuranose. In Pseudomonas syringae pv. tomato (strain ATCC BAA-871 / DC3000), this protein is Xylose isomerase.